A 410-amino-acid polypeptide reads, in one-letter code: Serine hydroxymethyltransferase (410 aa).

(6S)-5,6,7,8-tetrahydrofolate-binding positions include Leu-119 and 123 to 125; that span reads GHL. At Lys-228 the chain carries N6-(pyridoxal phosphate)lysine. 351-353 serves as a coordination point for (6S)-5,6,7,8-tetrahydrofolate; the sequence is SPF.

Belongs to the SHMT family. Homodimer. It depends on pyridoxal 5'-phosphate as a cofactor.

It localises to the cytoplasm. The enzyme catalyses (6R)-5,10-methylene-5,6,7,8-tetrahydrofolate + glycine + H2O = (6S)-5,6,7,8-tetrahydrofolate + L-serine. Its pathway is one-carbon metabolism; tetrahydrofolate interconversion. It participates in amino-acid biosynthesis; glycine biosynthesis; glycine from L-serine: step 1/1. Functionally, catalyzes the reversible interconversion of serine and glycine with tetrahydrofolate (THF) serving as the one-carbon carrier. This reaction serves as the major source of one-carbon groups required for the biosynthesis of purines, thymidylate, methionine, and other important biomolecules. Also exhibits THF-independent aldolase activity toward beta-hydroxyamino acids, producing glycine and aldehydes, via a retro-aldol mechanism. This is Serine hydroxymethyltransferase from Clostridium perfringens (strain 13 / Type A).